Here is a 293-residue protein sequence, read N- to C-terminus: Plant cysteine oxidase 1 (293 aa).

Fe cation-binding residues include histidine 148, histidine 150, and histidine 211. Residues 250–293 (SEDDDVLSSEEEKEGYAWLQERDDNPEDHTNVVGALYRGPKVED) are disordered. A compositionally biased stretch (acidic residues) spans 251 to 262 (EDDDVLSSEEEK). Residues 269 to 279 (QERDDNPEDHT) show a composition bias toward basic and acidic residues.

This sequence belongs to the cysteine dioxygenase family. Requires Fe(2+) as cofactor.

It localises to the nucleus. It is found in the cytoplasm. The catalysed reaction is L-cysteine + O2 = 3-sulfino-L-alanine + H(+). Functionally, catalyzes the oxidation of N-terminal cysteine residues (N-Cys), thus preparing the protein for N-end rule pathway-mediated proteasomal degradation, upstream of the N-end rule enzymes ATE1, ATE2 and PRT6. Controls the preparation of the group VII ethylene response factor (ERF-VII) proteins for degradation via the 26S proteasome N-end rule pathway. Acts as an oxygen sensor that controls the stability of ERF-VII proteins, which are stabilized in flooding-induced hypoxia, and regulate transcriptional adaptation to these adverse conditions. Not active on Cys located inside or at the C-terminus of a peptide. Acts redundantly with PCO2 to repress the anaerobic response. The polypeptide is Plant cysteine oxidase 1 (Arabidopsis thaliana (Mouse-ear cress)).